A 252-amino-acid chain; its full sequence is uncharacterized protein (252 aa).

Phosphoserine occurs at positions 195 and 209.

In terms of tissue distribution, testis-specific. Highly expressed in spermatocytes (at protein level).

Functionally, essential for normal spermatogenesis and male fertility. This is an uncharacterized protein from Mus musculus (Mouse).